The chain runs to 226 residues: Thiamine-phosphate synthase (226 aa).

Residues 46-50 (QFRDK) and D83 contribute to the 4-amino-2-methyl-5-(diphosphooxymethyl)pyrimidine site. Mg(2+)-binding residues include D84 and D103. Residue S122 coordinates 4-amino-2-methyl-5-(diphosphooxymethyl)pyrimidine. 149–151 (TQS) contacts 2-[(2R,5Z)-2-carboxy-4-methylthiazol-5(2H)-ylidene]ethyl phosphate. A 4-amino-2-methyl-5-(diphosphooxymethyl)pyrimidine-binding site is contributed by K152. 2-[(2R,5Z)-2-carboxy-4-methylthiazol-5(2H)-ylidene]ethyl phosphate is bound by residues G181 and 201–202 (IT).

Belongs to the thiamine-phosphate synthase family. Requires Mg(2+) as cofactor.

The enzyme catalyses 2-[(2R,5Z)-2-carboxy-4-methylthiazol-5(2H)-ylidene]ethyl phosphate + 4-amino-2-methyl-5-(diphosphooxymethyl)pyrimidine + 2 H(+) = thiamine phosphate + CO2 + diphosphate. It catalyses the reaction 2-(2-carboxy-4-methylthiazol-5-yl)ethyl phosphate + 4-amino-2-methyl-5-(diphosphooxymethyl)pyrimidine + 2 H(+) = thiamine phosphate + CO2 + diphosphate. The catalysed reaction is 4-methyl-5-(2-phosphooxyethyl)-thiazole + 4-amino-2-methyl-5-(diphosphooxymethyl)pyrimidine + H(+) = thiamine phosphate + diphosphate. It functions in the pathway cofactor biosynthesis; thiamine diphosphate biosynthesis; thiamine phosphate from 4-amino-2-methyl-5-diphosphomethylpyrimidine and 4-methyl-5-(2-phosphoethyl)-thiazole: step 1/1. Condenses 4-methyl-5-(beta-hydroxyethyl)thiazole monophosphate (THZ-P) and 2-methyl-4-amino-5-hydroxymethyl pyrimidine pyrophosphate (HMP-PP) to form thiamine monophosphate (TMP). This Haemophilus influenzae (strain 86-028NP) protein is Thiamine-phosphate synthase.